The primary structure comprises 692 residues: PTS system glucoside-specific EIICBA component (692 aa).

Residues 6 to 430 (KKFFGQLQRI…LNLKTPGRED (425 aa)) form the PTS EIIC type-1 domain. The next 10 helical transmembrane spans lie at 15-35 (IGKA…LLTF), 84-104 (LGLA…YLIM), 140-160 (LVLG…IGAL), 185-205 (FVPI…SFVW), 215-235 (LSNF…GIIE), 287-307 (AFTT…AFAI), 318-338 (VVGG…ITEP), 344-364 (LFVA…SFLI), 370-390 (VQIG…GLLS), and 398-418 (LVIP…TFLI). The 82-residue stretch at 441–522 (SELPFEVLEA…QQIMDGKITS (82 aa)) folds into the PTS EIIB type-1 domain. Cys463 (phosphocysteine intermediate; for EIIB activity) is an active-site residue. The region spanning 563–667 (DKVFSAKMMG…DTITPIIITN (105 aa)) is the PTS EIIA type-1 domain. His615 (tele-phosphohistidine intermediate; for EIIA activity) is an active-site residue.

It is found in the cell membrane. With respect to regulation, inhibited by methyl alpha-D-glucoside, methyl beta-D-glucoside, p-nitrophenyl alpha-D-glucoside, o-nitrophenyl beta-D-glucoside and salicin, but not by 2-deoxyglucose. Functionally, the phosphoenolpyruvate-dependent sugar phosphotransferase system (sugar PTS), a major carbohydrate active -transport system, catalyzes the phosphorylation of incoming sugar substrates concomitantly with their translocation across the cell membrane. This system is involved in alpha- and beta-glucoside transport. Can also transport glucose, but not galactose, fructose, mannose, cellobiose, sucrose, maltose, lactose, melibiose and trehalose, as well as N-acetylglucosamine. This Staphylococcus carnosus (strain TM300) protein is PTS system glucoside-specific EIICBA component (glcB).